Consider the following 273-residue polypeptide: Vacuolar iron transporter (273 aa).

At 1–47 (MGKQKIIDARKAYYEGDIEKSKEIHSHYHNLDKHAEHHSLDKDHLKT) the chain is on the cytoplasmic side. A helical transmembrane segment spans residues 48 to 68 (IIFGSLDGIITIFAIVSGCVG). Over 69-72 (ANIT) the chain is Vacuolar. The helical transmembrane segment at 73-93 (PAQVIIIGVGNLFANAISMGF) threads the bilayer. Topologically, residues 94–181 (SEYTSSTAQI…NEDKSEAFKK (88 aa)) are cytoplasmic. Residues E113, E116, E124, E127, M161, and E165 each coordinate Fe cation. The chain crosses the membrane as a helical span at residues 182–202 (GILMFLSFCFFGMIPLFSYVL). Over 203 to 212 (YNLFFSAENY) the chain is Vacuolar. The helical transmembrane segment at 213–233 (TSSFAVVFISTLITLFILGLF) threads the bilayer. Topologically, residues 234–246 (KSQFTTQKPIVCA) are cytoplasmic. Residues 247-267 (LSMVLNGSIAGMLPFLFGVLL) form a helical membrane-spanning segment. Topologically, residues 268–273 (KTNSGD) are vacuolar.

It belongs to the CCC1 family. As to quaternary structure, monomer.

The protein localises to the vacuole membrane. It is found in the endoplasmic reticulum membrane. It catalyses the reaction Fe(2+)(in) = Fe(2+)(out). Its function is as follows. Vacuolar iron transporter involved in the transfer of iron ions from the cytosol to the vacuole for intracellular iron storage. Involved in detoxification of excess iron. The transport mechanism is not well defined and the role of protons is not clear. This chain is Vacuolar iron transporter, found in Plasmodium berghei (strain Anka).